Here is a 98-residue protein sequence, read N- to C-terminus: U10-barytoxin-Tl1a (98 aa).

A signal peptide spans 1–21; it reads MKTLVLVAVLGVASLYLLSSA. A propeptide spanning residues 22–50 is cleaved from the precursor; that stretch reads SEVQQLSPAEEEFRAFVSTFGGLFETEER. 3 disulfide bridges follow: Cys-57-Cys-71, Cys-64-Cys-76, and Cys-70-Cys-89.

The protein belongs to the neurotoxin 10 (Hwtx-1) family. 27 (ICK-3) subfamily. Expressed by the venom gland.

The protein localises to the secreted. In terms of biological role, ion channel inhibitor. The chain is U10-barytoxin-Tl1a from Trittame loki (Brush-footed trapdoor spider).